We begin with the raw amino-acid sequence, 223 residues long: Putative protein phosphatase 2C 63 (223 aa).

Residues M1–G22 are disordered. One can recognise a PPM-type phosphatase domain in the interval M1–V212.

It belongs to the PP2C family.

The enzyme catalyses O-phospho-L-seryl-[protein] + H2O = L-seryl-[protein] + phosphate. It catalyses the reaction O-phospho-L-threonyl-[protein] + H2O = L-threonyl-[protein] + phosphate. This Oryza sativa subsp. japonica (Rice) protein is Putative protein phosphatase 2C 63.